The primary structure comprises 2123 residues: MESGELLPSSPASSTTPTSSSAPSVASAVSKSSLSTGAASLSSTASPCVLEAGKSKIKVSPDSVSGAEWWRTTDGHSRAGTPFFPPLLGIPPLFAPPAQNHDSSFHSRTSGKSSRNGPEKGINGSVNGTSAASVLGVNASVVATPASSSMGQNQSTSSGGGTLKCHQEQNKSQPVDARADRIKDKKPRKKAMESSSNSDSDSGTSSDTSSEGISSSDSDDLEEEEEEDQSVEESEDDDSDSETEAQHKSNNQVLLHGISDPKTDGQKATEKAQERRTHQPLPPVSESQTHPPFQSQQKQPQVLSQQLPFIFQSSQAKEESVTKHTSVIQSTGLVSNVKPLSLVNQAKKETYRKLVVPSPDVLKAGNKNTSEESSSLTSELRSKREQYKQTFPSQGKKQEMGKSLKKVIAALSNTKATSSSPAHPKLPLDNNHPNPFLTNALLGNHQPNGVIQSVIQEAPLALTTKTKMQSKINENVSSSTPFSSPVNLSTSGRRAPGSQTPALPSASPILHSSGKEKRVSNDATPLKAHHHPHPAAAAAALVEQFRGTDSDVPSSKDSEDSNEDEEEDDEEEDEEDDEDDESDDSQSESDSNSQSDSEGSEDDEEKDQEESDSDTEGEKPAVNLTQTSSSAKSPPSSLTAHSAPHLHIGSPPGSAPAALCSESQPPAFLGTSSSTLTSTPHSGTSKRRRVADDQELRIPLDYGWQRETRVRNFGGRLPGEVAYYAPCGKKLRQCPDMVKGMQWCLLKEEDVIPRIRAMDGRRGRPPNPDRPRAREESRMKRRKGRPPNVGSAEFLDNTDAKLLRKLQAQEIARQAAQIKLLRKLQKQEQARVAKEAKKQQAIMAAEEKRKQKEQMKIIKQQEKIKRIQQIRMEKELRAQQILEAKKKKKEEAANAKLLEAEKRTKEKELRRQQAVLLKHQERERRRQHVMLMKAMEARKKAEEKERLKQEKRDEKRLNKERKLEQRRLELEMAKELKKPKEDMCLADQKPLPEWPRIPGLVLSGTTFSDCLMVVQFLRNFGKVLGFDVNIDVPNLSVLQEGLLNIGDSMGEVQDLLVRLLSAAVCDPGLITGYKAKTALGEHLLNVGVNRDNVSEVLQIFMEAHCGQTELTESLKTKAFQAHTPAQKASILAFLVNELACSKSVVSEIDKNIEYMSNLRRDKWMVEGKLRKLRIIHAKKTGKRDASGGIDLGEEQHPLGTPTPGRKRRRKGGDSDYDDDDDDDSDDQADEDEEDEEDKDDKKGKKTDICEDEDEGDQTASVEELEKQIEKLSKQQSQYRRKLFDASHSLRSMMFGQDRYRRRYWILPQCGGIFVEGMESGEGLEEIAKEKEKLKKAESLQIKEEVFETSAETLNCSIRDHCEQKDDPKEKDNTNLFLQKPGSFSKLSKLLEVAKMPPESDVMTPPKVNVSTNGGPLSHQNSGKHPLGSVPSATTAQSPVGKTDASLFSSGSGSCGKFYSPLPNDQLLKTLTEKNRQWFSLLPKTPCDDTSLTHADLSTTLVTPQSQPPSKSPSPAPAALLGPSSVQSPPGLNPFALSPLQVKGGVSMMGLQFCGWPAGVLASNVPFTSPLPALGSGLGLPEGNGSSSFLTSSVASSKSDSPVPPAERPSSAQPVAVEVAKPVDFPSPKPIPEEMQFGWWRIIDPEDLKTLLKVLHLRGIREKALQKQIQKHLDYITQACVRNKDVAIIELNENEDNQVTRDLVENWSVEEQAMELDLSILQQVEDLERRVASASLQVKGWMCPEPASEREDLVYFEHKSLTKLFKEHDGELTGDEENSAHALARKSDNPLDIAVTRLADLERNIERRYLKSPLSTTIQIKLDNVGTVTVPAPAPSISGDGDGIEEDIAPGLRVWRRALAEARSAAQVALCIQQLQRSIAWEKSIMKVYCQICRKGDNEELLLLCDGCDKGCHTYCHRPKITTIPDGDWFCPACISKASGQSIKIKKIHVKGKKTNDSKKTKKGNVAGDTEDEDSASTSSSLKRGSKELKKRKMEETTSLNLSKAESTTSIKKPKKDESRDLALCSMILTEMETHEDSWPFLLPVNLKLVPGYKKVIKKPMDFSTIREKLNNGQYPNFETFALDVRLVFDNCETFNEDDSDIGRAGHSMRKYFEKKWTDTFKVS.

Disordered stretches follow at residues 1-129, 144-306, 357-402, 473-534, 546-691, 756-793, and 937-960; these read MESG…VNGT, TPAS…LSQQ, PSPD…EMGK, NENV…HPHP, RGTD…RRVA, RAMD…GSAE, and ARKK…LNKE. Positions 7-46 are enriched in low complexity; sequence LPSSPASSTTPTSSSAPSVASAVSKSSLSTGAASLSSTAS. Over residues 83 to 95 the composition is skewed to pro residues; sequence FFPPLLGIPPLFA. Positions 100–116 are enriched in polar residues; that stretch reads NHDSSFHSRTSGKSSRN. 2 stretches are compositionally biased toward low complexity: residues 147–157 and 193–216; these read SSSMGQNQSTS and ESSS…ISSS. The segment covering 217–243 has biased composition (acidic residues); the sequence is DSDDLEEEEEEDQSVEESEDDDSDSET. The segment covering 259–277 has biased composition (basic and acidic residues); the sequence is SDPKTDGQKATEKAQERRT. 2 stretches are compositionally biased toward low complexity: residues 291–306 and 366–379; these read PPFQ…LSQQ and NKNT…LTSE. The span at 473–502 shows a compositional bias: polar residues; the sequence is NENVSSSTPFSSPVNLSTSGRRAPGSQTPA. Residues 546–559 are compositionally biased toward basic and acidic residues; it reads RGTDSDVPSSKDSE. The span at 560–587 shows a compositional bias: acidic residues; sequence DSNEDEEEDDEEEDEEDDEDDESDDSQS. Residues 588-597 are compositionally biased toward low complexity; it reads ESDSNSQSDS. Over residues 598–615 the composition is skewed to acidic residues; it reads EGSEDDEEKDQEESDSDT. Composition is skewed to low complexity over residues 628–637 and 671–683; these read SSSAKSPPSS and TSSS…PHSG. Positions 690–765 constitute an MBD domain; the sequence is VADDQELRIP…RAMDGRRGRP (76 aa). The span at 756-778 shows a compositional bias: basic and acidic residues; the sequence is RAMDGRRGRPPNPDRPRAREESR. A DDT domain is found at 1004–1069; the sequence is GTTFSDCLMV…LSAAVCDPGL (66 aa). Disordered regions lie at residues 1183 to 1260, 1396 to 1444, 1499 to 1526, and 1588 to 1614; these read RDAS…QTAS, PPES…KTDA, TLVT…SSVQ, and FLTS…AQPV. The segment covering 1214 to 1238 has biased composition (acidic residues); sequence SDYDDDDDDDSDDQADEDEEDEEDK. Basic and acidic residues predominate over residues 1239–1248; sequence DDKKGKKTDI. The stretch at 1254–1281 forms a coiled coil; the sequence is EGDQTASVEELEKQIEKLSKQQSQYRRK. Polar residues-rich tracts occupy residues 1408–1422 and 1430–1444; these read NVST…QNSG and PSAT…KTDA. Residues 1505–1515 show a composition bias toward pro residues; the sequence is SQPPSKSPSPA. Residues 1588-1600 are compositionally biased toward low complexity; sequence FLTSSVASSKSDS. A PHD-type zinc finger spans residues 1886 to 1936; it reads KVYCQICRKGDNEELLLLCDGCDKGCHTYCHRPKITTIPDGDWFCPACISK. The disordered stretch occupies residues 1949 to 2013; that stretch reads VKGKKTNDSK…AESTTSIKKP (65 aa). The segment covering 1984-1995 has biased composition (basic and acidic residues); the sequence is GSKELKKRKMEE. Residues 1996–2010 show a composition bias toward polar residues; that stretch reads TTSLNLSKAESTTSI. Positions 2015–2119 constitute a Bromo domain; it reads KDESRDLALC…KYFEKKWTDT (105 aa).

Belongs to the WAL family. Component of the BRF-1 ISWI chromatin remodeling complex, at least composed of SMARCA1 and BAZ2B, which regulates the spacing of histone octamers on the DNA template to facilitate access to DNA. Within the BRF-1 ISWI chromatin remodeling complex interacts with SMARCA1; the interaction is direct. Component of the BRF-5 ISWI chromatin remodeling complex, at least composed of SMARCA5/SNF2H and BAZ2B, which regulates the spacing of histone octamers on the DNA template to facilitate access to DNA. Within the BRF-5 ISWI chromatin remodeling complex interacts with SMARCA5/SNF2H; the interaction is direct. Interacts with acetylated lysine residues on histone H1.4, H2A, H2B, H3 and H4 (in vitro). Interacts with EHMT1.

It localises to the nucleus. Functionally, regulatory subunit of the ATP-dependent BRF-1 and BRF-5 ISWI chromatin remodeling complexes, which form ordered nucleosome arrays on chromatin and facilitate access to DNA during DNA-templated processes such as DNA replication, transcription, and repair. Both complexes regulate the spacing of nucleosomes along the chromatin and have the ability to slide mononucleosomes to the center of a DNA template. The BRF-1 ISWI chromatin remodeling complex has a lower ATP hydrolysis rate than the BRF-5 ISWI chromatin remodeling complex. Chromatin reader protein, involved in positively modulating the rate of age-related behavioral deterioration. Represses the expression of mitochondrial function-related genes, perhaps by occupying their promoter regions, working in concert with histone methyltransferase EHMT1. This chain is Bromodomain adjacent to zinc finger domain protein 2B, found in Mus musculus (Mouse).